Here is a 635-residue protein sequence, read N- to C-terminus: Threonine--tRNA ligase (635 aa).

The TGS domain maps to 1 to 61 (MINISFPDGS…DNDCKFRILT (61 aa)). Residues 242–533 (DHRKLGRELD…LIEEYAGRFP (292 aa)) form a catalytic region. Positions 333, 384, and 510 each coordinate Zn(2+).

The protein belongs to the class-II aminoacyl-tRNA synthetase family. Homodimer. Zn(2+) is required as a cofactor.

It localises to the cytoplasm. The catalysed reaction is tRNA(Thr) + L-threonine + ATP = L-threonyl-tRNA(Thr) + AMP + diphosphate + H(+). Its function is as follows. Catalyzes the attachment of threonine to tRNA(Thr) in a two-step reaction: L-threonine is first activated by ATP to form Thr-AMP and then transferred to the acceptor end of tRNA(Thr). Also edits incorrectly charged L-seryl-tRNA(Thr). In Rickettsia rickettsii (strain Sheila Smith), this protein is Threonine--tRNA ligase.